A 1369-amino-acid polypeptide reads, in one-letter code: Phosphoribosylformylglycinamidine synthase (1369 aa).

Disordered stretches follow at residues His321–Lys352 and Glu373–Arg400. Gly330–Asp341 contributes to the ATP binding site. Ala721 is a binding site for ATP. Positions 722, 761, 765, and 934 each coordinate Mg(2+). Ser936 lines the ATP pocket. A Glutamine amidotransferase type-1 domain is found at Met1116 to Gly1369. Cys1209 serves as the catalytic Nucleophile. Active-site residues include His1330 and Glu1332.

The protein in the N-terminal section; belongs to the FGAMS family. In terms of assembly, monomer.

It is found in the cytoplasm. It carries out the reaction N(2)-formyl-N(1)-(5-phospho-beta-D-ribosyl)glycinamide + L-glutamine + ATP + H2O = 2-formamido-N(1)-(5-O-phospho-beta-D-ribosyl)acetamidine + L-glutamate + ADP + phosphate + H(+). Its pathway is purine metabolism; IMP biosynthesis via de novo pathway; 5-amino-1-(5-phospho-D-ribosyl)imidazole from N(2)-formyl-N(1)-(5-phospho-D-ribosyl)glycinamide: step 1/2. In terms of biological role, phosphoribosylformylglycinamidine synthase involved in the purines biosynthetic pathway. Catalyzes the ATP-dependent conversion of formylglycinamide ribonucleotide (FGAR) and glutamine to yield formylglycinamidine ribonucleotide (FGAM) and glutamate. This chain is Phosphoribosylformylglycinamidine synthase, found in Ralstonia nicotianae (strain ATCC BAA-1114 / GMI1000) (Ralstonia solanacearum).